The sequence spans 196 residues: ATP-dependent Clp protease proteolytic subunit (196 aa).

Catalysis depends on S101, which acts as the Nucleophile. H126 is a catalytic residue.

The protein belongs to the peptidase S14 family. Component of the chloroplastic Clp protease core complex.

The protein resides in the plastid. Its subcellular location is the chloroplast stroma. It catalyses the reaction Hydrolysis of proteins to small peptides in the presence of ATP and magnesium. alpha-casein is the usual test substrate. In the absence of ATP, only oligopeptides shorter than five residues are hydrolyzed (such as succinyl-Leu-Tyr-|-NHMec, and Leu-Tyr-Leu-|-Tyr-Trp, in which cleavage of the -Tyr-|-Leu- and -Tyr-|-Trp bonds also occurs).. Functionally, cleaves peptides in various proteins in a process that requires ATP hydrolysis. Has a chymotrypsin-like activity. Plays a major role in the degradation of misfolded proteins. The polypeptide is ATP-dependent Clp protease proteolytic subunit (Pinus thunbergii (Japanese black pine)).